The chain runs to 654 residues: Periplasmic beta-glucosidase/beta-xylosidase (654 aa).

The N-terminal stretch at 1–25 (MEKSATRQKALLIALPLLFSPLASA) is a signal peptide. Catalysis depends on residues Asp-235 and Asp-360.

The protein belongs to the glycosyl hydrolase 3 family.

It localises to the periplasm. The catalysed reaction is Hydrolysis of terminal, non-reducing beta-D-glucosyl residues with release of beta-D-glucose.. It carries out the reaction Hydrolysis of (1-&gt;4)-beta-D-xylans, to remove successive D-xylose residues from the non-reducing termini.. In terms of biological role, exhibits both beta-glucosidase and beta-xylosidase activities. This Dickeya chrysanthemi (Pectobacterium chrysanthemi) protein is Periplasmic beta-glucosidase/beta-xylosidase (bgxA).